We begin with the raw amino-acid sequence, 410 residues long: Peptidase T (410 aa).

His79 is a binding site for Zn(2+). Asp81 is an active-site residue. Asp142 contributes to the Zn(2+) binding site. Glu176 serves as the catalytic Proton acceptor. Residues Glu177, Asp199, and His381 each contribute to the Zn(2+) site.

It belongs to the peptidase M20B family. Requires Zn(2+) as cofactor.

The protein localises to the cytoplasm. The enzyme catalyses Release of the N-terminal residue from a tripeptide.. Functionally, cleaves the N-terminal amino acid of tripeptides. The sequence is that of Peptidase T from Bacillus thuringiensis subsp. konkukian (strain 97-27).